Reading from the N-terminus, the 298-residue chain is Ribosomal RNA small subunit methyltransferase A (298 aa).

Residues asparagine 35, leucine 37, glycine 62, glutamate 83, aspartate 108, and asparagine 133 each contribute to the S-adenosyl-L-methionine site.

This sequence belongs to the class I-like SAM-binding methyltransferase superfamily. rRNA adenine N(6)-methyltransferase family. RsmA subfamily.

The protein localises to the cytoplasm. The catalysed reaction is adenosine(1518)/adenosine(1519) in 16S rRNA + 4 S-adenosyl-L-methionine = N(6)-dimethyladenosine(1518)/N(6)-dimethyladenosine(1519) in 16S rRNA + 4 S-adenosyl-L-homocysteine + 4 H(+). Functionally, specifically dimethylates two adjacent adenosines (A1518 and A1519) in the loop of a conserved hairpin near the 3'-end of 16S rRNA in the 30S particle. May play a critical role in biogenesis of 30S subunits. The protein is Ribosomal RNA small subunit methyltransferase A of Streptococcus pyogenes serotype M2 (strain MGAS10270).